Reading from the N-terminus, the 170-residue chain is ATP synthase subunit b (170 aa).

Residues 15–37 (FNLFETNILNWAVVVFGLYKFLP) form a helical membrane-spanning segment.

The protein belongs to the ATPase B chain family. F-type ATPases have 2 components, F(1) - the catalytic core - and F(0) - the membrane proton channel. F(1) has five subunits: alpha(3), beta(3), gamma(1), delta(1), epsilon(1). F(0) has four main subunits: a(1), b(1), b'(1) and c(10-14). The alpha and beta chains form an alternating ring which encloses part of the gamma chain. F(1) is attached to F(0) by a central stalk formed by the gamma and epsilon chains, while a peripheral stalk is formed by the delta, b and b' chains.

It localises to the cellular thylakoid membrane. Functionally, f(1)F(0) ATP synthase produces ATP from ADP in the presence of a proton or sodium gradient. F-type ATPases consist of two structural domains, F(1) containing the extramembraneous catalytic core and F(0) containing the membrane proton channel, linked together by a central stalk and a peripheral stalk. During catalysis, ATP synthesis in the catalytic domain of F(1) is coupled via a rotary mechanism of the central stalk subunits to proton translocation. Its function is as follows. Component of the F(0) channel, it forms part of the peripheral stalk, linking F(1) to F(0). The chain is ATP synthase subunit b from Prochlorococcus marinus (strain MIT 9312).